A 152-amino-acid polypeptide reads, in one-letter code: Ubiquitin-conjugating enzyme E2 A (152 aa).

The UBC core domain maps to 4-150 (PARRRLMRDF…VSAIVEQSWR (147 aa)). The active-site Glycyl thioester intermediate is Cys88. Phosphoserine; by CDK9 is present on Ser120.

This sequence belongs to the ubiquitin-conjugating enzyme family. As to quaternary structure, interacts with RAD18 and WAC. Interacts with RFPL4A and CCNB1. Post-translationally, phosphorylation at Ser-120 by CDK9 increases activity towards histone H2B.

It is found in the late endosome. It localises to the lysosome. It catalyses the reaction S-ubiquitinyl-[E1 ubiquitin-activating enzyme]-L-cysteine + [E2 ubiquitin-conjugating enzyme]-L-cysteine = [E1 ubiquitin-activating enzyme]-L-cysteine + S-ubiquitinyl-[E2 ubiquitin-conjugating enzyme]-L-cysteine.. Its pathway is protein modification; protein ubiquitination. Its function is as follows. E2 ubiquitin-conjugating enzyme that accepts ubiquitin from the ubiquitin-activating enzyme E1 and transfers it to a E3 ubiquitin-protein ligase. In vitro catalyzes 'Lys-11', as well as 'Lys-48'-linked polyubiquitination. Together with the E3 enzyme BRE1 (RNF20 and/or RNF40), plays a role in transcription regulation by catalyzing the monoubiquitination of histone H2B at 'Lys-120' to form H2BK120ub1. H2BK120ub1 gives a specific tag for epigenetic transcriptional activation, elongation by RNA polymerase II, telomeric silencing, and is also a prerequisite for H3K4me and H3K79me formation. Involved in mitophagy by acting as a E2 ubiquitin-conjugating enzyme for PRKN. In association with the E3 enzyme UBR4, is involved in N-end rule-dependent protein degradation. In association with the E3 ubiquitin-protein ligase complex SIFI, inhibits the mitochondrial stress response by acting as a E2 ubiquitin-conjugating enzyme for UBR4 and KCMF1. This Homo sapiens (Human) protein is Ubiquitin-conjugating enzyme E2 A.